The chain runs to 202 residues: Inosine triphosphate pyrophosphatase (202 aa).

8 to 13 (TGNANK) is an ITP binding site. Glutamate 55 contacts Mg(2+). ITP-binding positions include lysine 67, 83 to 84 (DT), lysine 100, 159 to 162 (FGWD), lysine 182, and 187 to 188 (HR).

This sequence belongs to the HAM1 NTPase family. As to quaternary structure, homodimer. The cofactor is Mg(2+). Mn(2+) is required as a cofactor.

It is found in the cytoplasm. The protein localises to the nucleus. The catalysed reaction is ITP + H2O = IMP + diphosphate + H(+). The enzyme catalyses dITP + H2O = dIMP + diphosphate + H(+). It carries out the reaction XTP + H2O = XMP + diphosphate + H(+). Its function is as follows. Pyrophosphatase that hydrolyzes non-canonical purine nucleotides such as inosine triphosphate (ITP), deoxyinosine triphosphate (dITP) or xanthosine 5'-triphosphate (XTP) to their respective monophosphate derivatives. The enzyme does not distinguish between the deoxy- and ribose forms. Probably excludes non-canonical purines from RNA and DNA precursor pools, thus preventing their incorporation into RNA and DNA and avoiding chromosomal lesions. The polypeptide is Inosine triphosphate pyrophosphatase (Candida albicans (strain SC5314 / ATCC MYA-2876) (Yeast)).